A 91-amino-acid chain; its full sequence is ATP synthase subunit c (91 aa).

The next 2 helical transmembrane spans lie at Phe4–Ile24 and Ile53–Leu73.

It belongs to the ATPase C chain family. F-type ATPases have 2 components, F(1) - the catalytic core - and F(0) - the membrane proton channel. F(1) has five subunits: alpha(3), beta(3), gamma(1), delta(1), epsilon(1). F(0) has three main subunits: a(1), b(2) and c(10-14). The alpha and beta chains form an alternating ring which encloses part of the gamma chain. F(1) is attached to F(0) by a central stalk formed by the gamma and epsilon chains, while a peripheral stalk is formed by the delta and b chains.

It localises to the cell inner membrane. In terms of biological role, f(1)F(0) ATP synthase produces ATP from ADP in the presence of a proton or sodium gradient. F-type ATPases consist of two structural domains, F(1) containing the extramembraneous catalytic core and F(0) containing the membrane proton channel, linked together by a central stalk and a peripheral stalk. During catalysis, ATP synthesis in the catalytic domain of F(1) is coupled via a rotary mechanism of the central stalk subunits to proton translocation. Key component of the F(0) channel; it plays a direct role in translocation across the membrane. A homomeric c-ring of between 10-14 subunits forms the central stalk rotor element with the F(1) delta and epsilon subunits. The protein is ATP synthase subunit c of Citrifermentans bemidjiense (strain ATCC BAA-1014 / DSM 16622 / JCM 12645 / Bem) (Geobacter bemidjiensis).